A 534-amino-acid polypeptide reads, in one-letter code: Glucans biosynthesis protein D (534 aa).

The segment at residues 1–30 (MRMQRRHLLKNAAAALAALGLPALPQWALA) is a signal peptide (tat-type signal).

It belongs to the OpgD/OpgG family. Predicted to be exported by the Tat system. The position of the signal peptide cleavage has not been experimentally proven.

Its subcellular location is the periplasm. It participates in glycan metabolism; osmoregulated periplasmic glucan (OPG) biosynthesis. Probably involved in the control of the structural glucose backbone of osmoregulated periplasmic glucans (OPGs). The sequence is that of Glucans biosynthesis protein D from Xanthomonas oryzae pv. oryzae (strain KACC10331 / KXO85).